The sequence spans 95 residues: Aspartyl/glutamyl-tRNA(Asn/Gln) amidotransferase subunit C (95 aa).

This sequence belongs to the GatC family. Heterotrimer of A, B and C subunits.

The enzyme catalyses L-glutamyl-tRNA(Gln) + L-glutamine + ATP + H2O = L-glutaminyl-tRNA(Gln) + L-glutamate + ADP + phosphate + H(+). The catalysed reaction is L-aspartyl-tRNA(Asn) + L-glutamine + ATP + H2O = L-asparaginyl-tRNA(Asn) + L-glutamate + ADP + phosphate + 2 H(+). Allows the formation of correctly charged Asn-tRNA(Asn) or Gln-tRNA(Gln) through the transamidation of misacylated Asp-tRNA(Asn) or Glu-tRNA(Gln) in organisms which lack either or both of asparaginyl-tRNA or glutaminyl-tRNA synthetases. The reaction takes place in the presence of glutamine and ATP through an activated phospho-Asp-tRNA(Asn) or phospho-Glu-tRNA(Gln). The protein is Aspartyl/glutamyl-tRNA(Asn/Gln) amidotransferase subunit C of Nitrosococcus oceani (strain ATCC 19707 / BCRC 17464 / JCM 30415 / NCIMB 11848 / C-107).